A 122-amino-acid polypeptide reads, in one-letter code: Cytochrome c3 hydrogenase large chain (122 aa).

It depends on Fe cation as a cofactor.

The catalysed reaction is 2 Fe(III)-[cytochrome c3] + H2 = 2 Fe(II)-[cytochrome c3] + 2 H(+). This chain is Cytochrome c3 hydrogenase large chain (hoxG), found in Acidithiobacillus ferrooxidans (Thiobacillus ferrooxidans).